Reading from the N-terminus, the 407-residue chain is Tryptophan synthase beta chain (407 aa).

Lys91 is subject to N6-(pyridoxal phosphate)lysine.

This sequence belongs to the TrpB family. As to quaternary structure, tetramer of two alpha and two beta chains. Pyridoxal 5'-phosphate is required as a cofactor.

The enzyme catalyses (1S,2R)-1-C-(indol-3-yl)glycerol 3-phosphate + L-serine = D-glyceraldehyde 3-phosphate + L-tryptophan + H2O. It functions in the pathway amino-acid biosynthesis; L-tryptophan biosynthesis; L-tryptophan from chorismate: step 5/5. The beta subunit is responsible for the synthesis of L-tryptophan from indole and L-serine. The chain is Tryptophan synthase beta chain from Streptococcus pneumoniae (strain JJA).